A 212-amino-acid polypeptide reads, in one-letter code: Uracil phosphoribosyltransferase (212 aa).

Residues R78, R103, and 130-138 (DPMLATGSS) each bind 5-phospho-alpha-D-ribose 1-diphosphate. Residues I193 and 198-200 (GDA) contribute to the uracil site. Residue D199 participates in 5-phospho-alpha-D-ribose 1-diphosphate binding.

This sequence belongs to the UPRTase family. Mg(2+) serves as cofactor.

The catalysed reaction is UMP + diphosphate = 5-phospho-alpha-D-ribose 1-diphosphate + uracil. It participates in pyrimidine metabolism; UMP biosynthesis via salvage pathway; UMP from uracil: step 1/1. With respect to regulation, allosterically activated by GTP. Functionally, catalyzes the conversion of uracil and 5-phospho-alpha-D-ribose 1-diphosphate (PRPP) to UMP and diphosphate. The polypeptide is Uracil phosphoribosyltransferase (Pseudomonas fluorescens (strain Pf0-1)).